Reading from the N-terminus, the 636-residue chain is Putative lipase ATG15 (636 aa).

Residues 1–19 (MYKYGTVVDPAMTTNRRSR) are Cytoplasmic-facing. The helical; Signal-anchor for type II membrane protein transmembrane segment at 20–42 (LSGFRCASTARVTATLLLSFLAF) threads the bilayer. Residues 43-636 (SPSSASSDFG…DDLEFATDEM (594 aa)) lie on the Lumenal side of the membrane. Residues Asn211, Asn233, Asn291, Asn315, and Asn477 are each glycosylated (N-linked (GlcNAc...) asparagine). The segment at 478–500 (GTETTTTSSPSTTSTTRTRTRTS) is disordered. Positions 479–500 (TETTTTSSPSTTSTTRTRTRTS) are enriched in low complexity.

It belongs to the AB hydrolase superfamily. Lipase family. In terms of assembly, binds to both phosphatidylinositol (PI) and phosphatidylinositol 3,5-bisphosphate (PIP2).

It localises to the endosome. Its subcellular location is the multivesicular body membrane. The protein resides in the prevacuolar compartment membrane. It carries out the reaction a triacylglycerol + H2O = a diacylglycerol + a fatty acid + H(+). In terms of biological role, lipase which is essential for lysis of subvacuolar cytoplasm to vacuole targeted bodies and intravacuolar autophagic bodies. Involved in the lysis of intravacuolar multivesicular body (MVB) vesicles. The intravacuolar membrane disintegration by ATG15 is critical to life span extension. Autophagy is required for proper vegetative growth, asexual/sexual reproduction, and full virulence. Autophagy is particularly involved in the biosynthesis of deoxynivalenol (DON), an important virulence determinant. The chain is Putative lipase ATG15 from Gibberella zeae (strain ATCC MYA-4620 / CBS 123657 / FGSC 9075 / NRRL 31084 / PH-1) (Wheat head blight fungus).